The sequence spans 955 residues: MSQNTPSLRELEHHSAFVERHIGPNDAEIAQMLGVIGHASLDAMTDAIVPAKIKSPAPLALPESITEVQALAKIRAIADKNTVLRSFIGQGYYGTHTPNVILRNILENPAWYTAYTPYQAEISQGRMEALINFQTLCADLTGMEIANASLLDEATAAAEAMTLAKRSAKSKSDTFFVHDAVHPQTLELLRTRAEPMGIVLRVGTPAEALEADSFGLLLQYPDTFGQVGDYKALVDAVHARGGLVAVATDLLALTLLAAPGEWGADIVVGNSQRFGVPFGFGGPHAAFMACRDAYKRSMPGRLIGVSIDAQGNPAYRLTLQTREQHIRREKATSNICTAQVLLAVMASMYAVYHGPEGLTRIARRTHRLASILAAALRKAGVQVGGDFFDTLHVTGVHAEEIHAKARAAGYNLRAIDSDSVGISLDETTTRADIVAVASVFGASLDVDALDASTADALPAGLLRQSEFLTHPVFNTHHSEHELLRYLRSLADKDLAMDRTMIPLGSCTMKLNATAEMIPVTWPEFSQIHPLVPADQALGYKELIDSLEAMLVECTGYDAVSLQPNSGAQGEYAGLLAIRAYHRSRGEDHRDICLIPDSAHGTNPASAQMCGMKVVVTKTDANGNVDVEDIRLNAEKYSDRLAAIMMTYPSTHGVFEEEVVEICEIIHKHGGQVYTDGANMNALVGVAKPGKWGSDVSHLNLHKTFCIPHGGGGPGVGPCAVKEHLAPFLPGKLGDHGPVGMVSAASFGSASILPISWMYIAMMGTEGLRKATQVAQLNANYIAKRLAPHFKTLYTGRNGLVAHECILDVRPLEKTSGIGAEDVAKRLIDFGFHAPTLSFPVAGTLMVEPTESESLHELDRFIDAMIQIREEITAIEDGRLDREDNPLKNAPHTATAVTASEWTHAYPRELAAFPLPSLKLQKYWPPVARVDNVYGDKNVMCACIPVDAYKDDEVEA.

Lysine 702 bears the N6-(pyridoxal phosphate)lysine mark.

Belongs to the GcvP family. As to quaternary structure, the glycine cleavage system is composed of four proteins: P, T, L and H. Requires pyridoxal 5'-phosphate as cofactor.

The catalysed reaction is N(6)-[(R)-lipoyl]-L-lysyl-[glycine-cleavage complex H protein] + glycine + H(+) = N(6)-[(R)-S(8)-aminomethyldihydrolipoyl]-L-lysyl-[glycine-cleavage complex H protein] + CO2. The glycine cleavage system catalyzes the degradation of glycine. The P protein binds the alpha-amino group of glycine through its pyridoxal phosphate cofactor; CO(2) is released and the remaining methylamine moiety is then transferred to the lipoamide cofactor of the H protein. The sequence is that of Glycine dehydrogenase (decarboxylating) from Stenotrophomonas maltophilia (strain R551-3).